The sequence spans 637 residues: Putative pentatricopeptide repeat-containing protein At5g65820 (637 aa).

12 PPR repeats span residues 146 to 180 (SIEV…NPQL), 182 to 216 (EPEL…GFEP), 217 to 247 (DEYV…MRMR), 251 to 285 (NLRY…GFEP), 286 to 320 (DIVD…GFEP), 321 to 355 (NANC…ECEA), 356 to 390 (DVVT…GLMP), 391 to 425 (SELT…EYHP), 426 to 460 (DIGI…GLSP), 461 to 495 (GVDT…GLFS), 498 to 532 (QYGT…GACE), and 534 to 568 (NVLS…DFMP). The segment covering 616-630 (QDLTEKAKSKQDREG) has biased composition (basic and acidic residues). The interval 616-637 (QDLTEKAKSKQDREGKKKQRSR) is disordered.

The protein belongs to the PPR family. P subfamily.

This chain is Putative pentatricopeptide repeat-containing protein At5g65820, found in Arabidopsis thaliana (Mouse-ear cress).